The primary structure comprises 377 residues: N-acetyldiaminopimelate deacetylase (377 aa).

The active site involves Asp70. Glu129 (proton acceptor) is an active-site residue.

This sequence belongs to the peptidase M20A family. N-acetyldiaminopimelate deacetylase subfamily.

The enzyme catalyses N-acetyl-(2S,6S)-2,6-diaminopimelate + H2O = (2S,6S)-2,6-diaminopimelate + acetate. It functions in the pathway amino-acid biosynthesis; L-lysine biosynthesis via DAP pathway; LL-2,6-diaminopimelate from (S)-tetrahydrodipicolinate (acetylase route): step 3/3. In terms of biological role, catalyzes the conversion of N-acetyl-diaminopimelate to diaminopimelate and acetate. The protein is N-acetyldiaminopimelate deacetylase of Streptococcus thermophilus (strain CNRZ 1066).